Here is a 382-residue protein sequence, read N- to C-terminus: Mannitol-1-phosphate 5-dehydrogenase (382 aa).

Position 3–14 (3–14 (ALHFGAGNIGRG)) interacts with NAD(+). The residue at position 269 (Lys-269) is an N6-acetyllysine.

It belongs to the mannitol dehydrogenase family.

It catalyses the reaction D-mannitol 1-phosphate + NAD(+) = beta-D-fructose 6-phosphate + NADH + H(+). In Escherichia coli O139:H28 (strain E24377A / ETEC), this protein is Mannitol-1-phosphate 5-dehydrogenase.